Here is a 375-residue protein sequence, read N- to C-terminus: GDP-mannose transporter GONST2 (375 aa).

A run of 9 helical transmembrane segments spans residues 79-99 (LVSG…NKIV), 112-132 (MLYQ…SGVV), 141-161 (LIRV…SGMY), 165-185 (YINV…TGIG), 199-219 (WAAM…DLTF), 262-282 (MVLL…ILLG), 300-320 (VVAT…MWFL), 327-347 (TYSL…LVLF), and 349-369 (VPLS…GVVF).

It belongs to the nucleotide-sugar transporter family. GDP-Mannose:GMP antiporter (GMA) (TC 2.A.7.13) subfamily. Expressed in rosette leaves, stems, flowers and siliques.

The protein resides in the golgi apparatus membrane. Its function is as follows. GDP-mannose transporter that may be involved in the import of GDP-mannose from the cytoplasm into the Golgi lumen. The sequence is that of GDP-mannose transporter GONST2 from Arabidopsis thaliana (Mouse-ear cress).